We begin with the raw amino-acid sequence, 283 residues long: Pantothenate synthetase (283 aa).

34 to 41 (MGALHEGH) serves as a coordination point for ATP. H41 acts as the Proton donor in catalysis. Q65 is a (R)-pantoate binding site. A beta-alanine-binding site is contributed by Q65. 152–155 (GEKD) is an ATP binding site. Q158 contributes to the (R)-pantoate binding site. ATP is bound at residue 189-192 (MSSR).

The protein belongs to the pantothenate synthetase family. As to quaternary structure, homodimer.

It localises to the cytoplasm. It catalyses the reaction (R)-pantoate + beta-alanine + ATP = (R)-pantothenate + AMP + diphosphate + H(+). It participates in cofactor biosynthesis; (R)-pantothenate biosynthesis; (R)-pantothenate from (R)-pantoate and beta-alanine: step 1/1. Its function is as follows. Catalyzes the condensation of pantoate with beta-alanine in an ATP-dependent reaction via a pantoyl-adenylate intermediate. The sequence is that of Pantothenate synthetase from Rhodopseudomonas palustris (strain BisA53).